Here is a 129-residue protein sequence, read N- to C-terminus: UPF0344 protein SSP1805 (129 aa).

4 helical membrane-spanning segments follow: residues 1–21, 36–56, 68–88, and 100–120; these read MLHMHIASWVLLIILFFAAYF, IHMLLRLFMLLVLISGFWVWI, MLLTLKMICGVAVVALMEVTI, and LMWTTIVVIILTMIIGIILPM.

The protein belongs to the UPF0344 family.

Its subcellular location is the cell membrane. The protein is UPF0344 protein SSP1805 of Staphylococcus saprophyticus subsp. saprophyticus (strain ATCC 15305 / DSM 20229 / NCIMB 8711 / NCTC 7292 / S-41).